A 385-amino-acid polypeptide reads, in one-letter code: Lysine 6-dehydrogenase (385 aa).

This sequence belongs to the saccharopine dehydrogenase family. In terms of assembly, homohexamer.

The catalysed reaction is L-lysine + NAD(+) = L-1-piperideine-6-carboxylate + NH4(+) + NADH + 2 H(+). Catalyzes the oxidative deamination of L-lysine in the presence of NAD. Can also use (S)-(2-aminoethyl)-L-cysteine as a substrate, but more slowly. Can use both NAD and NADP but the preferred substrate is NAD. The polypeptide is Lysine 6-dehydrogenase (lysDH) (Geobacillus stearothermophilus (Bacillus stearothermophilus)).